The following is a 401-amino-acid chain: Chalcone synthase 6 (401 aa).

The active site involves cysteine 168.

Belongs to the thiolase-like superfamily. Chalcone/stilbene synthases family.

The catalysed reaction is (E)-4-coumaroyl-CoA + 3 malonyl-CoA + 3 H(+) = 2',4,4',6'-tetrahydroxychalcone + 3 CO2 + 4 CoA. Its pathway is secondary metabolite biosynthesis; flavonoid biosynthesis. The primary product of this enzyme is 4,2',4',6'-tetrahydroxychalcone (also termed naringenin-chalcone or chalcone) which can under specific conditions spontaneously isomerize into naringenin. This is Chalcone synthase 6 (CHS6) from Sorghum bicolor (Sorghum).